The following is a 95-amino-acid chain: LSM complex subunit LSM2 (95 aa).

One can recognise a Sm domain in the interval 2-76; sequence LFFSFFKTLV…VRYVYLNKNM (75 aa).

It belongs to the snRNP Sm proteins family. In terms of assembly, component of the heptameric LSM1-LSM7 complex that forms a seven-membered ring structure with a donut shape. The LSm subunits are arranged in the order LSM1, LSM2, LSM3, LSM6, LSM5, LSM7 and LSM4. Except for LSM1, where a C-terminal helix crosses the ring structure to form additional interactions with LSM3 and LSM6, each subunit interacts only with its two neighboring subunits. The LSM1-LSM7 complex interacts with PAT1; within the complex PAT1 has direct interactions with LSM2 and LSM3. The LSM1-LSM7 complex interacts with XRN1. Component of the heptameric LSM2-LSM8 complex that forms a seven-membered ring structure with a donut shape; an RNA strand can pass through the hole in the center of the ring structure. The LSm subunits are arranged in the order LSM8, LSM2, LSM3, LSM6, LSM5, LSM7 and LSM4. Interacts with U6 snRNA SNR6 and chaperone PRP24; to promote formation of the U4/U6-U5 tri-snRNP (small nuclear ribonucleoprotein) complex, the LSM2-LSM8 complex preferentially binds U6 snRNA that has been modified to contain a non-cyclic 3' phosphate. Component of the spliceosome U4/U6-U5 tri-snRNP complex composed of the U4, U6 and U5 snRNAs and at least PRP3, PRP4, PRP6, PRP8, PRP18, PRP31, PRP38, SNU13, SNU23, SNU66, SNU114, SPP381, SMB1, SMD1, SMD2, SMD3, SMX2, SMX3, LSM2, LSM3, LSM4, LSM5, LSM6, LSM7, LSM8, BRR2 and DIB1. May be found in a complex comprising LSM2-LSM7 without LSM1 or LSM8; the complex associates with pre-P RNA and snoRNA SNR5.

The protein localises to the nucleus. It is found in the nucleolus. The protein resides in the cytoplasm. In terms of biological role, component of LSm protein complexes, which are involved in RNA processing and may function in a chaperone-like manner. Component of the cytoplasmic LSM1-LSM7 complex which is involved in mRNA degradation by activating the decapping step. Together with PAT1, the LSM1-LSM7 complex binds to osmotic stress-activated mRNAs to attenuate the osmotic stress response, probably by limiting ribosome access to the mRNA and consequently translation. Component of the nuclear LSM2-LSM8 complex, which is involved in spliceosome assembly. The LSM2-LSM8 complex plays a role in the biogenesis of the spliceosomal U4/U6-U5 tri-snRNP complex by accelerating PRP24-mediated annealing of U4/U6 di-snRNA. The LSM2-LSM8 complex binds U6 snRNA terminating with a non-cyclic 3' phosphate group. LSM2-LSM8 is probably also involved in degradation of nuclear pre-mRNA by targeting them for decapping. LSM2-LSM8 could be involved in processing of pre-tRNAs, pre-rRNAs and U3 snoRNA, although involvement may be indirect. In a complex that probably contains LSM2-LSM7, but not LSM1 or LSM8, associates with the precursor of the RNA component of RNase P (pre-P RNA) and may be involved in maturing pre-P RNA; the complex also associates with snoRNA SNR5. This chain is LSM complex subunit LSM2 (LSM2), found in Saccharomyces cerevisiae (strain ATCC 204508 / S288c) (Baker's yeast).